The chain runs to 420 residues: Na(+)/H(+) antiporter NhaA (420 aa).

Helical transmembrane passes span 4-24, 70-90, 104-124, 132-152, 165-185, 192-212, 233-250, 299-319, 323-343, 361-381, and 395-415; these read VWNFITGYSLLLIGGAIIALI, DLLMALFFAIAAKEVWEAVIL, LVATLGGMVGPISIYLGIAYF, AVANGWAIPTATDIAFSYLVG, FLLLLAIADDAAGLLILAIFY, PAWLLLSFGAALGVYVLANWL, LSFWPYALAGCASWYGFM, VEIILGLFGLMNAGVAFSAMG, WLVLAGLLIGKPVGIFLFGWL, LVVIGCVAAIGFTVSLFVASV, and GALFSFGAAAVSIIVGKLTQV.

The protein belongs to the NhaA Na(+)/H(+) (TC 2.A.33) antiporter family.

The protein resides in the cell inner membrane. It catalyses the reaction Na(+)(in) + 2 H(+)(out) = Na(+)(out) + 2 H(+)(in). Its function is as follows. Na(+)/H(+) antiporter that extrudes sodium in exchange for external protons. This Jannaschia sp. (strain CCS1) protein is Na(+)/H(+) antiporter NhaA.